A 155-amino-acid polypeptide reads, in one-letter code: Interleukin-2 (155 aa).

The signal sequence occupies residues 1-20; sequence MYKIQLLSCIALTLALVANG. The O-linked (GalNAc...) threonine glycan is linked to T23. C79 and C127 are disulfide-bonded.

This sequence belongs to the IL-2 family.

Its subcellular location is the secreted. Cytokine produced by activated CD4-positive helper T-cells and to a lesser extend activated CD8-positive T-cells and natural killer (NK) cells that plays pivotal roles in the immune response and tolerance. Binds to a receptor complex composed of either the high-affinity trimeric IL-2R (IL2RA/CD25, IL2RB/CD122 and IL2RG/CD132) or the low-affinity dimeric IL-2R (IL2RB and IL2RG). Interaction with the receptor leads to oligomerization and conformation changes in the IL-2R subunits resulting in downstream signaling starting with phosphorylation of JAK1 and JAK3. In turn, JAK1 and JAK3 phosphorylate the receptor to form a docking site leading to the phosphorylation of several substrates including STAT5. This process leads to activation of several pathways including STAT, phosphoinositide-3-kinase/PI3K and mitogen-activated protein kinase/MAPK pathways. Functions as a T-cell growth factor and can increase NK-cell cytolytic activity as well. Promotes strong proliferation of activated B-cells and subsequently immunoglobulin production. Plays a pivotal role in regulating the adaptive immune system by controlling the survival and proliferation of regulatory T-cells, which are required for the maintenance of immune tolerance. Moreover, participates in the differentiation and homeostasis of effector T-cell subsets, including Th1, Th2, Th17 as well as memory CD8-positive T-cells. The polypeptide is Interleukin-2 (IL2) (Boselaphus tragocamelus (Nilgai)).